The sequence spans 494 residues: Protein DETOXIFICATION 23 (494 aa).

The segment at 1–25 (MARREGEVTETLLKKSTENRGEDRD) is disordered. Transmembrane regions (helical) follow at residues 40–60 (LWVV…LSLI), 74–94 (AAYS…LLGM), 123–143 (IVLT…GPIL), 158–178 (IIAL…TCQM), 188–208 (IIAY…WLLV), 223–243 (LVAH…GGCT), 268–288 (GGMI…TGNL), 297–317 (ALAI…GFMA), 340–360 (MVVV…FLFL), 384–404 (LLAF…VAVG), 416–436 (LACY…VVGL), and 441–461 (VWLG…VMTM).

It belongs to the multi antimicrobial extrusion (MATE) (TC 2.A.66.1) family.

It localises to the membrane. This Arabidopsis thaliana (Mouse-ear cress) protein is Protein DETOXIFICATION 23.